A 470-amino-acid chain; its full sequence is Neuraminidase (470 aa).

The Intravirion segment spans residues Met-1–Ser-14. The involved in apical transport and lipid raft association stretch occupies residues Gly-11 to Thr-32. A helical membrane pass occupies residues Leu-15 to Ile-35. Residues Thr-32–Thr-86 are hypervariable stalk region. The Virion surface portion of the chain corresponds to Leu-36 to Met-470. 3 N-linked (GlcNAc...) asparagine; by host glycosylation sites follow: Asn-46, Asn-54, and Asn-84. Residues Ile-89 to Met-470 form a head of neuraminidase region. 8 disulfide bridges follow: Cys-90–Cys-417, Cys-122–Cys-127, Cys-182–Cys-229, Cys-231–Cys-236, Cys-277–Cys-290, Cys-279–Cys-288, Cys-316–Cys-335, and Cys-421–Cys-446. A substrate-binding site is contributed by Arg-116. The N-linked (GlcNAc...) asparagine; by host glycan is linked to Asn-144. The active-site Proton donor/acceptor is the Asp-149. Residue Arg-150 coordinates substrate. Glu-275–Glu-276 contributes to the substrate binding site. Arg-291 provides a ligand contact to substrate. Position 292 (Asp-292) interacts with Ca(2+). N-linked (GlcNAc...) asparagine; by host glycosylation occurs at Asn-293. Ca(2+) contacts are provided by Gly-296 and Asp-322. Substrate is bound at residue Arg-368. Asn-398 carries N-linked (GlcNAc...) asparagine; by host glycosylation. Tyr-402 functions as the Nucleophile in the catalytic mechanism.

It belongs to the glycosyl hydrolase 34 family. Homotetramer. Ca(2+) serves as cofactor. In terms of processing, N-glycosylated.

The protein resides in the virion membrane. Its subcellular location is the host apical cell membrane. The catalysed reaction is Hydrolysis of alpha-(2-&gt;3)-, alpha-(2-&gt;6)-, alpha-(2-&gt;8)- glycosidic linkages of terminal sialic acid residues in oligosaccharides, glycoproteins, glycolipids, colominic acid and synthetic substrates.. With respect to regulation, inhibited by the neuraminidase inhibitors zanamivir (Relenza) and oseltamivir (Tamiflu). These drugs interfere with the release of progeny virus from infected cells and are effective against all influenza strains. Resistance to neuraminidase inhibitors is quite rare. Catalyzes the removal of terminal sialic acid residues from viral and cellular glycoconjugates. Cleaves off the terminal sialic acids on the glycosylated HA during virus budding to facilitate virus release. Additionally helps virus spread through the circulation by further removing sialic acids from the cell surface. These cleavages prevent self-aggregation and ensure the efficient spread of the progeny virus from cell to cell. Otherwise, infection would be limited to one round of replication. Described as a receptor-destroying enzyme because it cleaves a terminal sialic acid from the cellular receptors. May facilitate viral invasion of the upper airways by cleaving the sialic acid moieties on the mucin of the airway epithelial cells. Likely to plays a role in the budding process through its association with lipid rafts during intracellular transport. May additionally display a raft-association independent effect on budding. Plays a role in the determination of host range restriction on replication and virulence. Sialidase activity in late endosome/lysosome traffic seems to enhance virus replication. The polypeptide is Neuraminidase (Influenza A virus (strain A/Turkey/Ireland/1378/1983 H5N8)).